The following is a 396-amino-acid chain: Phosphoglycerate kinase (396 aa).

Substrate contacts are provided by residues 22–24, R37, 60–63, R118, and R151; these read DLN and HFGR. ATP is bound by residues K201, E323, and 353–356; that span reads GGDT.

It belongs to the phosphoglycerate kinase family. In terms of assembly, monomer.

It is found in the cytoplasm. It catalyses the reaction (2R)-3-phosphoglycerate + ATP = (2R)-3-phospho-glyceroyl phosphate + ADP. The protein operates within carbohydrate degradation; glycolysis; pyruvate from D-glyceraldehyde 3-phosphate: step 2/5. The polypeptide is Phosphoglycerate kinase (Xanthobacter autotrophicus (strain ATCC BAA-1158 / Py2)).